The chain runs to 338 residues: UDP-glucose 4-epimerase (338 aa).

Residues 11-12 (FI), 31-36 (DNLCNS), 58-59 (DI), 80-84 (FAGLK), N99, S124, Y149, K153, and F178 contribute to the NAD(+) site. Substrate contacts are provided by S124 and Y149. Y149 serves as the catalytic Proton acceptor. Substrate-binding positions include N179, 199–200 (NL), 216–218 (SVF), R231, and 292–295 (RAGD).

Belongs to the NAD(P)-dependent epimerase/dehydratase family. Homodimer. Requires NAD(+) as cofactor.

The enzyme catalyses UDP-alpha-D-glucose = UDP-alpha-D-galactose. It participates in carbohydrate metabolism; galactose metabolism. Involved in the metabolism of galactose. Plays an essential role in the incorporation of galactose into meningococcal lipopolysaccharide surface molecules, which are important for pathogenesis. Catalyzes the conversion of UDP-galactose (UDP-Gal) to UDP-glucose (UDP-Glc) through a mechanism involving the transient reduction of NAD. The sequence is that of UDP-glucose 4-epimerase (galE) from Neisseria gonorrhoeae.